Here is a 974-residue protein sequence, read N- to C-terminus: Coiled-coil domain-containing protein 146 (974 aa).

A disordered region spans residues 1–44 (MEDRSKYIAEESEDEEDEEQEEKEKKGGASTSTETEEDQEDIPS). Acidic residues predominate over residues 10–21 (EESEDEEDEEQE). Serine 12 is subject to Phosphoserine. Coiled coils occupy residues 105–160 (VQLL…QERE), 195–340 (KLLK…TKEN), 421–474 (LPEQ…REVL), 512–660 (KKLE…NESG), 687–712 (QDIE…QRQI), and 767–848 (LTEE…ELSM).

As to quaternary structure, interacts with CCDC38 and CCDC42. Interacts with intraflagellar transport proteins IFT20 and IFT88.

The protein resides in the cytoplasm. It is found in the cytoskeleton. It localises to the microtubule organizing center. Its subcellular location is the centrosome. The protein localises to the centriole. The protein resides in the cell projection. It is found in the cilium. It localises to the flagellum. Its subcellular location is the flagellum axoneme. The protein localises to the cilium basal body. The protein resides in the midbody. Essential for sperm flagellum biogenesis and male fertility. The sequence is that of Coiled-coil domain-containing protein 146 (Ccdc146) from Rattus norvegicus (Rat).